The primary structure comprises 443 residues: UDP-N-acetylmuramate--L-alanine ligase (443 aa).

Position 110–116 (110–116 (GAHGKTS)) interacts with ATP.

Belongs to the MurCDEF family.

Its subcellular location is the cytoplasm. The catalysed reaction is UDP-N-acetyl-alpha-D-muramate + L-alanine + ATP = UDP-N-acetyl-alpha-D-muramoyl-L-alanine + ADP + phosphate + H(+). It functions in the pathway cell wall biogenesis; peptidoglycan biosynthesis. Cell wall formation. The chain is UDP-N-acetylmuramate--L-alanine ligase from Streptococcus equi subsp. zooepidemicus (strain H70).